Here is a 1247-residue protein sequence, read N- to C-terminus: Nidogen-1 (1247 aa).

The signal sequence occupies residues 1–28; the sequence is MLASSSRIRAAWTRALLLPLLLAGPVGC. One can recognise an NIDO domain in the interval 106–268; sequence PFLADLDTTD…GVWVFEIGSP (163 aa). Sulfotyrosine is present on residues Tyr-289 and Tyr-296. The EGF-like 1 domain occupies 386 to 426; sequence SRQTCANNRHQCSVHAECRDYATGFCCSCVAGYTGNGRQCV. Disulfide bonds link Cys-390–Cys-403, Cys-397–Cys-412, Cys-411–Cys-618, Cys-414–Cys-425, Cys-672–Cys-685, Cys-679–Cys-695, Cys-697–Cys-708, Cys-714–Cys-727, Cys-721–Cys-736, Cys-738–Cys-750, Cys-762–Cys-777, Cys-769–Cys-787, Cys-789–Cys-800, Cys-806–Cys-817, Cys-811–Cys-826, Cys-828–Cys-839, Cys-849–Cys-878, Cys-889–Cys-896, and Cys-898–Cys-919. The region spanning 430 to 667 is the Nidogen G2 beta-barrel domain; the sequence is SPQRVNGKVK…GPVREGSPDA (238 aa). The EGF-like 2 domain maps to 668 to 709; the sequence is LQNPCYIGTHGCDTNAACRPGPRTQFTCECSIGFRGDGRTCY. The short motif at 702-704 is the Cell attachment site element; the sequence is RGD. The 42-residue stretch at 710–751 folds into the EGF-like 3; calcium-binding domain; sequence DIDECSEQPSVCGSHTICNNHPGTFRCECVEGYQFSDEGTCV. The region spanning 758 to 801 is the EGF-like 4 domain; sequence PINYCETGLHNCDIPQRAQCIYTGGSSYTCSCLPGFSGDGQACQ. The EGF-like 5; calcium-binding domain maps to 802 to 840; sequence DVDECQPSRCHPDAFCYNTPGSFTCQCKPGYQGDGFRCV. A Thyroglobulin type-1 domain is found at 846–919; that stretch reads KTRCQHEREH…RTRPGMTPPC (74 aa). Thr-922 and Thr-935 each carry an O-linked (GalNAc...) threonine glycan. LDL-receptor class B repeat units follow at residues 990-1032, 1033-1075, 1076-1120, and 1121-1162; these read KMVY…DHLG, RNIF…DSVR, GNLY…DAFS, and SQLC…YGKN. The EGF-like 6 domain maps to 1208–1244; that stretch reads GHNYCSVNNGGCTHLCLATPGSRTCRCPDNTLGVDCI. Disulfide bonds link Cys-1212–Cys-1223, Cys-1219–Cys-1232, and Cys-1234–Cys-1243.

In terms of assembly, interacts with FBLN1. Interacts with LGALS3BP. Interacts with PLXDC1. Interacts with SVEP1. In terms of processing, N- and O-glycosylated.

It localises to the secreted. It is found in the extracellular space. The protein localises to the extracellular matrix. The protein resides in the basement membrane. Sulfated glycoprotein widely distributed in basement membranes and tightly associated with laminin. Also binds to collagen IV and perlecan. It probably has a role in cell-extracellular matrix interactions. This chain is Nidogen-1 (NID1), found in Homo sapiens (Human).